A 150-amino-acid polypeptide reads, in one-letter code: Avidin-related protein 4/5 (150 aa).

The signal sequence occupies residues 1-24 (MVHTTSPLLLLLLLSLALVAPSLS). Positions 26–147 (RKCSLTGKWT…GYNNFTRLCT (122 aa)) constitute an Avidin-like domain. A disulfide bridge connects residues Cys28 and Cys105. Biotin contacts are provided by Asn36, Ser40, Tyr57, Thr59, and Asp63. Residues Asn67 and Asn93 are each glycosylated (N-linked (GlcNAc...) asparagine). Biotin-binding residues include Ser95 and Asn140. Asn141 carries an N-linked (GlcNAc...) asparagine glycan.

Belongs to the avidin/streptavidin family. Homotetramer.

The protein resides in the secreted. Functionally, forms a strong non-covalent specific complex with biotin. This chain is Avidin-related protein 4/5 (AVR4), found in Gallus gallus (Chicken).